The chain runs to 149 residues: Transcription factor Atoh7 (149 aa).

Residues 41-93 (RRRLAANARERRRMQGLNTAFDRLRRVVPQWGQDKKLSKYETLQMALSYIIAL) enclose the bHLH domain.

In terms of assembly, forms a heterodimer with TCF3 isoform E47; interaction may be required for DNA-binding in certain situations. As to expression, expressed in retinal ganglion cells. Expressed in the cerebellum, trapezoid body, ventral nucleus of the lateral lamniscus and in areas of the auditory hindbrain such as the cochlear nucleus, lateral superior olive and medial nucleus of the trapezoid body. Expressed in the modiolar nerve root and in the cochlear in a small group of bushy neurons within the acoustic nerve. Expressed weakly in the sensory epithelia of the saccule and utricle.

The protein resides in the nucleus. The protein localises to the perikaryon. It localises to the cell projection. Its subcellular location is the axon. Transcription factor that binds to DNA at the consensus sequence 5'-CAG[GC]TG-3'. Dimerization with TCF3 isoform E47 may be required in certain situations. Binds to gene promoters and enhancer elements, and thereby regulates a transcriptional program of retinal ganglion cell (RGC) determinant genes. Although the exact mechanism is not certain, retinal transcription regulation by ATOH7 has a role in RGC determination and survival, photoreceptor population development, targeting of RGC axons to the optic nerve and development of the retino-hypothalamic tract. Binds to its own promoter and enhancer sequences, suggesting autoregulation of ATOH7 transcription. Required for retinal circadian rhythm photoentrainment. Plays a role in brainstem auditory signaling and binaural processing. The polypeptide is Transcription factor Atoh7 (Mus musculus (Mouse)).